Here is a 684-residue protein sequence, read N- to C-terminus: Leishmanolysin-like peptidase (684 aa).

A Zn(2+)-binding site is contributed by His257. Glu258 is an active-site residue. Zn(2+) is bound by residues His261 and His364.

The protein belongs to the peptidase M8 family. Requires Zn(2+) as cofactor.

The protein resides in the cytoplasm. Its function is as follows. Essential for the coordination of mitotic progression, and also plays a role in cell migration. The polypeptide is Leishmanolysin-like peptidase (Drosophila pseudoobscura pseudoobscura (Fruit fly)).